Consider the following 110-residue polypeptide: DNA-binding protein PAE3044 (110 aa).

The protein belongs to the PDCD5 family.

In Pyrobaculum aerophilum (strain ATCC 51768 / DSM 7523 / JCM 9630 / CIP 104966 / NBRC 100827 / IM2), this protein is DNA-binding protein PAE3044.